Reading from the N-terminus, the 89-residue chain is Small ribosomal subunit protein uS15 (89 aa).

It belongs to the universal ribosomal protein uS15 family. In terms of assembly, part of the 30S ribosomal subunit. Forms a bridge to the 50S subunit in the 70S ribosome, contacting the 23S rRNA.

One of the primary rRNA binding proteins, it binds directly to 16S rRNA where it helps nucleate assembly of the platform of the 30S subunit by binding and bridging several RNA helices of the 16S rRNA. In terms of biological role, forms an intersubunit bridge (bridge B4) with the 23S rRNA of the 50S subunit in the ribosome. The chain is Small ribosomal subunit protein uS15 from Bacteroides fragilis (strain ATCC 25285 / DSM 2151 / CCUG 4856 / JCM 11019 / LMG 10263 / NCTC 9343 / Onslow / VPI 2553 / EN-2).